We begin with the raw amino-acid sequence, 199 residues long: Sulfocyanin (199 aa).

A helical; Signal-anchor for type II membrane protein transmembrane segment spans residues 7-27 (VLPVVVGILVVIIAVAVGVYV). The 110-residue stretch at 79–188 (NFNGTSSGSL…SGMWAVLVAS (110 aa)) folds into the Plastocyanin-like domain. Cu cation-binding residues include histidine 110, cysteine 171, histidine 176, and methionine 181.

It belongs to the multicopper oxidase family.

Its subcellular location is the cell membrane. The 4 redox proteins SoxE, SoxF, SoxG and SoxH probably form part of a membrane respiratory complex together with SoxM, a catalytic subunit of cytochrome oxidase. This chain is Sulfocyanin (soxE), found in Sulfolobus acidocaldarius (strain ATCC 33909 / DSM 639 / JCM 8929 / NBRC 15157 / NCIMB 11770).